The primary structure comprises 378 residues: Odorant receptor 33a (378 aa).

Residues 1-33 lie on the Cytoplasmic side of the membrane; sequence MDSRRKVRSENLYKTYWLYWRLLGVEGDYPFRR. A helical membrane pass occupies residues 34 to 54; that stretch reads LVDFTITSFITILFPVHLILG. Over 55–62 the chain is Extracellular; that stretch reads MYKKPQIQ. A helical membrane pass occupies residues 63–83; the sequence is VFRSLHFTSECLFCSYKFFCF. Residues 84–127 are Cytoplasmic-facing; sequence RWKLKEIKTIEGLLQDLDSRVESEEERNYFNQNPSRVARMLSKS. The chain crosses the membrane as a helical span at residues 128-148; sequence YLVAAISAIITATVAGLFSTG. The Extracellular segment spans residues 149 to 163; the sequence is RNLMYLGWFPYDFQA. Residues 164 to 184 form a helical membrane-spanning segment; the sequence is TAAIYWISFSYQAIGSSLLIL. Residues 185–254 lie on the Cytoplasmic side of the membrane; the sequence is ENLANDSYPP…LLRSTLHLSQ (70 aa). The helical transmembrane segment at 255 to 275 threads the bilayer; it reads LGQFLSSGINISITLINILFF. Residues 276-285 lie on the Extracellular side of the membrane; the sequence is AENNFAMLYY. The helical transmembrane segment at 286-306 threads the bilayer; the sequence is AVFFAAMLIELFPSCYYGILM. The Cytoplasmic segment spans residues 307 to 355; sequence TMEFDKLPYAIFSSNWLKMDKRYNRSLIILMQLTLVPVNIKAGGIVGID. Residues 356–376 form a helical membrane-spanning segment; that stretch reads MSAFFATVRMAYSFYTLALSF. The Extracellular segment spans residues 377–378; that stretch reads RV.

It belongs to the insect chemoreceptor superfamily. Heteromeric odorant receptor channel (TC 1.A.69) family. Or2a subfamily. As to quaternary structure, interacts with Orco. Complexes exist early in the endomembrane system in olfactory sensory neurons (OSNs), coupling these complexes to the conserved ciliary trafficking pathway. Expressed in 1-2 cells on the distal edge of the antenna but not the maxillary palp.

It is found in the cell membrane. Odorant receptor which mediates acceptance or avoidance behavior, depending on its substrates. The odorant receptor repertoire encodes a large collection of odor stimuli that vary widely in identity, intensity, and duration. May form a complex with Orco to form odorant-sensing units, providing sensitive and prolonged odorant signaling and calcium permeability. The protein is Odorant receptor 33a (Or33a) of Drosophila melanogaster (Fruit fly).